Here is a 443-residue protein sequence, read N- to C-terminus: ATP-dependent protease ATPase subunit HslU (443 aa).

ATP is bound by residues Ile18, 60–65, Asp256, Glu321, and Arg393; that span reads GVGKTE.

Belongs to the ClpX chaperone family. HslU subfamily. A double ring-shaped homohexamer of HslV is capped on each side by a ring-shaped HslU homohexamer. The assembly of the HslU/HslV complex is dependent on binding of ATP.

The protein localises to the cytoplasm. ATPase subunit of a proteasome-like degradation complex; this subunit has chaperone activity. The binding of ATP and its subsequent hydrolysis by HslU are essential for unfolding of protein substrates subsequently hydrolyzed by HslV. HslU recognizes the N-terminal part of its protein substrates and unfolds these before they are guided to HslV for hydrolysis. The sequence is that of ATP-dependent protease ATPase subunit HslU from Buchnera aphidicola subsp. Acyrthosiphon pisum (strain 5A).